The following is a 215-amino-acid chain: Glycerol-3-phosphate acyltransferase (215 aa).

6 helical membrane-spanning segments follow: residues 3-23, 42-61, 68-90, 110-130, 134-154, and 162-182; these read LILL…LWIG, TNTF…LIDI, TLLP…FAVL, AGVL…VFVL, LFSM…ISVL, and LLPG…AIII.

Belongs to the PlsY family. Probably interacts with PlsX.

It localises to the cell membrane. It catalyses the reaction an acyl phosphate + sn-glycerol 3-phosphate = a 1-acyl-sn-glycero-3-phosphate + phosphate. The protein operates within lipid metabolism; phospholipid metabolism. Its function is as follows. Catalyzes the transfer of an acyl group from acyl-phosphate (acyl-PO(4)) to glycerol-3-phosphate (G3P) to form lysophosphatidic acid (LPA). This enzyme utilizes acyl-phosphate as fatty acyl donor, but not acyl-CoA or acyl-ACP. The sequence is that of Glycerol-3-phosphate acyltransferase from Streptococcus equi subsp. zooepidemicus (strain MGCS10565).